Consider the following 598-residue polypeptide: Transcriptional repressor tup12 (598 aa).

The disordered stretch occupies residues Ile-118 to Ser-177. WD repeat units follow at residues Glu-285–Phe-325, Leu-332–Arg-371, Asp-374–Cys-413, Trp-415–Arg-454, Trp-456–Lys-495, Tyr-510–Gln-549, and Ser-552–Ser-585.

It belongs to the WD repeat TUP1 family.

In terms of biological role, transcriptional repressor. The sequence is that of Transcriptional repressor tup12 (tup12) from Schizosaccharomyces pombe (strain 972 / ATCC 24843) (Fission yeast).